The primary structure comprises 384 residues: Deoxyguanosinetriphosphate triphosphohydrolase-like protein (384 aa).

An HD domain is found at 63 to 199 (RLTHSLEVAT…ASLADDISYI (137 aa)).

It belongs to the dGTPase family. Type 2 subfamily.

This is Deoxyguanosinetriphosphate triphosphohydrolase-like protein from Rickettsia typhi (strain ATCC VR-144 / Wilmington).